Consider the following 407-residue polypeptide: Arginine biosynthesis bifunctional protein ArgJ (407 aa).

Residues Thr157, Lys183, Thr194, Glu280, Asn402, and Thr407 each contribute to the substrate site. The Nucleophile role is filled by Thr194.

Belongs to the ArgJ family. In terms of assembly, heterotetramer of two alpha and two beta chains.

Its subcellular location is the cytoplasm. It carries out the reaction N(2)-acetyl-L-ornithine + L-glutamate = N-acetyl-L-glutamate + L-ornithine. The catalysed reaction is L-glutamate + acetyl-CoA = N-acetyl-L-glutamate + CoA + H(+). It functions in the pathway amino-acid biosynthesis; L-arginine biosynthesis; L-ornithine and N-acetyl-L-glutamate from L-glutamate and N(2)-acetyl-L-ornithine (cyclic): step 1/1. Its pathway is amino-acid biosynthesis; L-arginine biosynthesis; N(2)-acetyl-L-ornithine from L-glutamate: step 1/4. Functionally, catalyzes two activities which are involved in the cyclic version of arginine biosynthesis: the synthesis of N-acetylglutamate from glutamate and acetyl-CoA as the acetyl donor, and of ornithine by transacetylation between N(2)-acetylornithine and glutamate. This chain is Arginine biosynthesis bifunctional protein ArgJ, found in Bacillus anthracis.